We begin with the raw amino-acid sequence, 64 residues long: Copper-specific metallothionein-2 (64 aa).

The Cu(+) site is built by Cys3, Cys5, Cys9, Cys11, Cys16, Cys18, Cys22, Cys24, Cys27, Cys33, Cys40, Cys44, Cys50, Cys52, Cys56, and Cys58.

The protein belongs to the metallothionein superfamily. Type 2 family.

Functionally, the metallothioneins are involved in the cellular sequestration of toxic metal ions and regulation of essential trace elements. This isoform binds exclusively copper. The protein is Copper-specific metallothionein-2 of Callinectes sapidus (Blue crab).